A 319-amino-acid polypeptide reads, in one-letter code: Malate dehydrogenase (319 aa).

Residues 10–15 (GAGNIG) and aspartate 34 each bind NAD(+). Substrate contacts are provided by arginine 83 and arginine 89. NAD(+) is bound by residues asparagine 96 and 119 to 121 (ITN). 2 residues coordinate substrate: asparagine 121 and arginine 152. The active-site Proton acceptor is histidine 176.

This sequence belongs to the LDH/MDH superfamily. MDH type 3 family.

The catalysed reaction is (S)-malate + NAD(+) = oxaloacetate + NADH + H(+). Its function is as follows. Catalyzes the reversible oxidation of malate to oxaloacetate. This chain is Malate dehydrogenase, found in Francisella novicida.